The sequence spans 187 residues: Large ribosomal subunit protein bL17 (187 aa).

The interval 122 to 187 is disordered; the sequence is PKVRSSRTST…EADAAEKSDK (66 aa). A compositionally biased stretch (low complexity) spans 127 to 144; that stretch reads SRTSTATAPVAAAPVAEA. Positions 145 to 157 are enriched in acidic residues; sequence PAEESDVPVEETD. A compositionally biased stretch (low complexity) spans 167–176; it reads AETTDAAAAE.

It belongs to the bacterial ribosomal protein bL17 family. As to quaternary structure, part of the 50S ribosomal subunit. Contacts protein L32.

In Clavibacter sepedonicus (Clavibacter michiganensis subsp. sepedonicus), this protein is Large ribosomal subunit protein bL17.